We begin with the raw amino-acid sequence, 350 residues long: ATP-dependent (S)-NAD(P)H-hydrate dehydratase (350 aa).

A YjeF C-terminal domain is found at Leu-35–Leu-342. (6S)-NADPHX is bound by residues Gly-139 and Asn-192 to Arg-198. ATP-binding positions include Lys-230 to Asp-234 and Gly-249 to Gly-258. Asp-259 contributes to the (6S)-NADPHX binding site.

This sequence belongs to the NnrD/CARKD family. Mg(2+) is required as a cofactor.

Its subcellular location is the cytoplasm. It catalyses the reaction (6S)-NADHX + ATP = ADP + phosphate + NADH + H(+). The catalysed reaction is (6S)-NADPHX + ATP = ADP + phosphate + NADPH + H(+). Catalyzes the dehydration of the S-form of NAD(P)HX at the expense of ATP, which is converted to ADP. Together with NAD(P)HX epimerase, which catalyzes the epimerization of the S- and R-forms, the enzyme allows the repair of both epimers of NAD(P)HX, a damaged form of NAD(P)H that is a result of enzymatic or heat-dependent hydration. The chain is ATP-dependent (S)-NAD(P)H-hydrate dehydratase from Mycosarcoma maydis (Corn smut fungus).